The following is a 144-amino-acid chain: Large ribosomal subunit protein uL11 (144 aa).

This sequence belongs to the universal ribosomal protein uL11 family. As to quaternary structure, part of the ribosomal stalk of the 50S ribosomal subunit. Interacts with L10 and the large rRNA to form the base of the stalk. L10 forms an elongated spine to which L12 dimers bind in a sequential fashion forming a multimeric L10(L12)X complex. Post-translationally, one or more lysine residues are methylated.

In terms of biological role, forms part of the ribosomal stalk which helps the ribosome interact with GTP-bound translation factors. The chain is Large ribosomal subunit protein uL11 from Rickettsia bellii (strain OSU 85-389).